The chain runs to 266 residues: Translation initiation factor 2 subunit alpha (266 aa).

The S1 motif domain occupies 12–83 (GEILIATVKQ…RKGTVDVSLK (72 aa)).

This sequence belongs to the eIF-2-alpha family. Heterotrimer composed of an alpha, a beta and a gamma chain.

Functionally, eIF-2 functions in the early steps of protein synthesis by forming a ternary complex with GTP and initiator tRNA. In Saccharolobus islandicus (strain L.S.2.15 / Lassen #1) (Sulfolobus islandicus), this protein is Translation initiation factor 2 subunit alpha.